A 372-amino-acid chain; its full sequence is Dual-specificity RNA methyltransferase RlmN (372 aa).

Catalysis depends on E94, which acts as the Proton acceptor. The region spanning 100–339 (DGDRATLCVS…VTIRKTRGDD (240 aa)) is the Radical SAM core domain. The cysteines at positions 107 and 344 are disulfide-linked. [4Fe-4S] cluster is bound by residues C114, C118, and C121. Residues 168–169 (GE), S200, 222–224 (SLH), and N301 contribute to the S-adenosyl-L-methionine site. The S-methylcysteine intermediate role is filled by C344.

The protein belongs to the radical SAM superfamily. RlmN family. The cofactor is [4Fe-4S] cluster.

The protein resides in the cytoplasm. The enzyme catalyses adenosine(2503) in 23S rRNA + 2 reduced [2Fe-2S]-[ferredoxin] + 2 S-adenosyl-L-methionine = 2-methyladenosine(2503) in 23S rRNA + 5'-deoxyadenosine + L-methionine + 2 oxidized [2Fe-2S]-[ferredoxin] + S-adenosyl-L-homocysteine. The catalysed reaction is adenosine(37) in tRNA + 2 reduced [2Fe-2S]-[ferredoxin] + 2 S-adenosyl-L-methionine = 2-methyladenosine(37) in tRNA + 5'-deoxyadenosine + L-methionine + 2 oxidized [2Fe-2S]-[ferredoxin] + S-adenosyl-L-homocysteine. Functionally, specifically methylates position 2 of adenine 2503 in 23S rRNA and position 2 of adenine 37 in tRNAs. m2A2503 modification seems to play a crucial role in the proofreading step occurring at the peptidyl transferase center and thus would serve to optimize ribosomal fidelity. This is Dual-specificity RNA methyltransferase RlmN from Aliivibrio fischeri (strain ATCC 700601 / ES114) (Vibrio fischeri).